Consider the following 251-residue polypeptide: Chromobox protein homolog 7 (251 aa).

A Chromo domain is found at 11 to 69 (FAVESIRKKRVRKGKVEYLVKWKGWPPKYSTWEPEEHILDPRLVMAYEEKEERDRASGY). Residues 190 to 220 (EPAAQPPEEEADADLAEGPPPWTPALPSSEV) form a disordered region. A required for cellular lifespan extension region spans residues 223–236 (TDITANSITVTFRE).

In terms of assembly, component of a PRC1-like complex. Interacts with RING1 and RNF2/RING1B, but not with BMI1, EED or EZH2. Interacts with PCGF1, PCGF2, PCGF3, PCGF5 and PCGF6.

The protein localises to the nucleus. In terms of biological role, component of a Polycomb group (PcG) multiprotein PRC1-like complex, a complex class required to maintain the transcriptionally repressive state of many genes, including Hox genes, throughout development. PcG PRC1 complex acts via chromatin remodeling and modification of histones; it mediates monoubiquitination of histone H2A 'Lys-119', rendering chromatin heritably changed in its expressibility. Promotes histone H3 trimethylation at 'Lys-9' (H3K9me3). Binds to trimethylated lysine residues in histones, and possibly also other proteins. Regulator of cellular lifespan by maintaining the repression of CDKN2A, but not by inducing telomerase activity. In Homo sapiens (Human), this protein is Chromobox protein homolog 7 (CBX7).